A 291-amino-acid polypeptide reads, in one-letter code: MNAYLSDQPVRLSPLRDEQGNQPRFGLLLEPGRPGMHVGELPAQWLKGLARSHHLLLLRGFAAFADAESLTRYCHDFGEVMLWPFGAVLELVEQEGAEDHIFANNYVPLHWDGMYLETVPEFQVFHCVDAPGDSDGGRTTFSSTPAALQLADSSELELWRRASGRYQRSAAHYSSRSAAPIVERHPRREFPILRFCEPPVEGDASFINPSEFHYDGIAPEQRGELLASLRRCLYHPQAHYAHRWRSDDLVIADNLTLLHGREAFAHRAPRHLRRVHIHAEPALRNPHLQRD.

Residues H110, D112, and H259 each coordinate Fe cation.

Belongs to the TfdA dioxygenase family. Homotrimer in solution. Fe(2+) serves as cofactor.

The catalysed reaction is (2S)-3-(4-hydroxyphenyl)-2-isocyanopropanoate + 2-oxoglutarate + O2 = (2E)-3-(4-hydroxyphenyl)-2-isocyanoprop-2-enoate + succinate + CO2 + H2O. In terms of biological role, involved in the biosynthesis of paerucumarin, a cyclized isocyano derivative of tyrosine. Catalyzes the 2-oxoglutarate-dependent oxidation of tyrosine isonitrile. The protein is Tyrosine isonitrile desaturase of Pseudomonas aeruginosa (strain ATCC 15692 / DSM 22644 / CIP 104116 / JCM 14847 / LMG 12228 / 1C / PRS 101 / PAO1).